Consider the following 731-residue polypeptide: Ribonuclease R (731 aa).

An RNB domain is found at 260-589 (RTDLRHFPFF…LHRVIKYLLF (330 aa)). Residues 647-728 (GCILNGVISN…NEKKIELSLY (82 aa)) enclose the S1 motif domain.

This sequence belongs to the RNR ribonuclease family. RNase R subfamily. Monomer.

The protein resides in the cytoplasm. It carries out the reaction Exonucleolytic cleavage in the 3'- to 5'-direction to yield nucleoside 5'-phosphates.. In terms of biological role, 3'-5' exoribonuclease that releases 5'-nucleoside monophosphates and is involved in maturation of structured RNAs. The protein is Ribonuclease R of Buchnera aphidicola subsp. Acyrthosiphon pisum (strain APS) (Acyrthosiphon pisum symbiotic bacterium).